A 548-amino-acid polypeptide reads, in one-letter code: Zinc metalloproteinase dpy-31 (548 aa).

Residues 1-24 form the signal peptide; sequence MSLLRSASLLLVVVTAALPPCTLG. Residues 25-150 constitute a propeptide that is removed on maturation; sequence YSLHDGSRLD…KTGQRRVKRK (126 aa). In terms of domain architecture, Peptidase M12A spans 150–349; sequence KFIGSDLRRW…IRLMNKIYCS (200 aa). Asn190 carries N-linked (GlcNAc...) asparagine glycosylation. Disulfide bonds link Cys193/Cys348, Cys216/Cys237, Cys352/Cys372, Cys374/Cys383, and Cys394/Cys422. Residue His245 coordinates Zn(2+). Glu246 is an active-site residue. Zn(2+) contacts are provided by His249 and His255. The 41-residue stretch at 344–384 folds into the EGF-like domain; that stretch reads NKIYCSNVCSRKLPCQRGGYTDPRRCDRCRCPDGFTGQFCE. Positions 394-510 constitute a CUB domain; it reads CGGRIQVNSG…RGFEARARAL (117 aa). Asn461 is a glycosylation site (N-linked (GlcNAc...) asparagine). The region spanning 513-547 is the TSP type-1 domain; that stretch reads NGQWASWTPWTPCTASCGACGSRMRTRVCPHGACP. Intrachain disulfides connect Cys525/Cys546, Cys529/Cys546, and Cys541/Cys546.

The cofactor is Zn(2+).

It localises to the secreted. In terms of biological role, metalloprotease which cleaves the carboxyl terminus of procollagens to mature collagens. Probably involved in cuticular collagen maturation. This is Zinc metalloproteinase dpy-31 from Haemonchus contortus (Barber pole worm).